Consider the following 300-residue polypeptide: Transcription factor DUO1 (300 aa).

HTH myb-type domains are found at residues 8–64 (KEEI…RPNL) and 65–116 (KNGC…KRLA). DNA-binding regions (H-T-H motif) lie at residues 36–60 (WSSI…VNKL) and 89–112 (WARI…SSRQ). The span at 123 to 135 (SDASSSSFNPKSS) shows a compositional bias: low complexity. The segment at 123–145 (SDASSSSFNPKSSSSHRLKGKNV) is disordered. Residues 136–145 (SSHRLKGKNV) are compositionally biased toward basic residues.

As to expression, confined to inflorescences, especially in stamens and pollen.

It is found in the nucleus. Functionally, transcription activator that acts as a positive regulator of male germline development by promoting both gametic cell specification and cell cycle progression. Binds to canonical MYB sites 5'-AACCGTC-3', 5'-AAACCGC-3' and 5'-AACCGT-3' in promoters to trigger the expression of male germline-specific or enriched genes (e.g. MGH3, GEX2 and GCS1), including those required for fertilization. Required for sperm cell specification leading to pollen maturation by activating a germline-specific regulon. Involved in pollen mitosis entry at G2-M transition via the regulation of CYCB1-1, DAZ1 and DAZ2 expression. This is Transcription factor DUO1 from Arabidopsis thaliana (Mouse-ear cress).